The following is a 141-amino-acid chain: Histone H2B (141 aa).

A compositionally biased stretch (basic and acidic residues) spans 1 to 10; it reads MAPKAAEKKP. A disordered region spans residues 1-49; sequence MAPKAAEKKPSTGGKAPAGGKAPAEKKEAGKKTAAAASGDKKKRGKTRK. Residues Lys8 and Lys9 each carry the N6-acetyllysine; alternate modification. Residues Lys8 and Lys9 each participate in a glycyl lysine isopeptide (Lys-Gly) (interchain with G-Cter in SUMO); alternate cross-link. Residues 11 to 22 show a composition bias toward low complexity; sequence STGGKAPAGGKA. The residue at position 15 (Lys15) is an N6-acetyllysine. Lys26 is modified (N6-acetyllysine; alternate). Residue Lys26 forms a Glycyl lysine isopeptide (Lys-Gly) (interchain with G-Cter in SUMO); alternate linkage. Lys27 participates in a covalent cross-link: Glycyl lysine isopeptide (Lys-Gly) (interchain with G-Cter in SUMO). Lys135 participates in a covalent cross-link: Glycyl lysine isopeptide (Lys-Gly) (interchain with G-Cter in ubiquitin).

Belongs to the histone H2B family. In terms of assembly, the nucleosome is a histone octamer containing two molecules each of H2A, H2B, H3 and H4 assembled in one H3-H4 heterotetramer and two H2A-H2B heterodimers. The octamer wraps approximately 147 bp of DNA. In terms of processing, monoubiquitinated by the ubc2-bre1 complex to form H2BK123ub1. H2BK123ub1 gives a specific tag for epigenetic transcriptional activation and is also prerequisite for H3K4me and H3K79me formation. H2BK123ub1 also modulates the formation of double-strand breaks during meiosis and is a prerequisite for DNA-damage checkpoint activation. Acetylated by gcn5 to form H2BK11ac and H2BK16ac. H2BK16ac can also be formed by esa1. Acetylation of N-terminal lysines and particularly formation of H2BK11acK16ac has a positive effect on transcription. Post-translationally, sumoylation to form H2BK6su or H2BK7su, and probably also H2BK16su or H2BK17su, occurs preferentially near the telomeres and represses gene transcription.

The protein resides in the nucleus. The protein localises to the chromosome. Its function is as follows. Core component of nucleosome. Nucleosomes wrap and compact DNA into chromatin, limiting DNA accessibility to the cellular machineries which require DNA as a template. Histones thereby play a central role in transcription regulation, DNA repair, DNA replication and chromosomal stability. DNA accessibility is regulated via a complex set of post-translational modifications of histones, also called histone code, and nucleosome remodeling. This chain is Histone H2B (htb1), found in Aspergillus oryzae (strain ATCC 42149 / RIB 40) (Yellow koji mold).